Reading from the N-terminus, the 161-residue chain is Large ribosomal subunit protein bL9 (161 aa).

The protein belongs to the bacterial ribosomal protein bL9 family.

In terms of biological role, binds to the 23S rRNA. This Blochmanniella floridana protein is Large ribosomal subunit protein bL9.